Reading from the N-terminus, the 284-residue chain is Gigasin-3a (284 aa).

Residues 202–284 form a disordered region; sequence GLDNPLPNPR…FKAGRKNNRN (83 aa). The segment covering 223 to 245 has biased composition (low complexity); sequence SSPLPESTPKSSTKTSSASPIKS. Residues 246 to 257 are compositionally biased toward basic residues; that stretch reads RQGKKLRGKKQN. Residues 258–267 are compositionally biased toward polar residues; it reads KTGNTRFTYR. Basic residues predominate over residues 268–284; the sequence is NNKRNIKFKAGRKNNRN.

In terms of tissue distribution, component of the organic matrix of calcified shell layers.

The polypeptide is Gigasin-3a (Magallana gigas (Pacific oyster)).